The sequence spans 202 residues: Small ribosomal subunit protein uS4c (202 aa).

The S4 RNA-binding domain maps to 90 to 154 (MRLDNILFRL…SQSIITKNLN (65 aa)).

The protein belongs to the universal ribosomal protein uS4 family. In terms of assembly, part of the 30S ribosomal subunit. Contacts protein S5. The interaction surface between S4 and S5 is involved in control of translational fidelity.

Its subcellular location is the plastid. The protein resides in the chloroplast. Functionally, one of the primary rRNA binding proteins, it binds directly to 16S rRNA where it nucleates assembly of the body of the 30S subunit. Its function is as follows. With S5 and S12 plays an important role in translational accuracy. The polypeptide is Small ribosomal subunit protein uS4c (rps4) (Monoclea forsteri (Liverwort)).